The sequence spans 424 residues: Elongation factor 1-alpha (424 aa).

Residues 5 to 223 (KPHLNLITIG…DAFKVPEKPI (219 aa)) enclose the tr-type G domain. The segment at 14–21 (GHVDHGKS) is G1. 14 to 21 (GHVDHGKS) contacts GTP. Serine 21 contacts Mg(2+). The interval 70–74 (GVTID) is G2. The interval 91 to 94 (DAPG) is G3. Residues 91-95 (DAPGH) and 148-151 (NKMD) contribute to the GTP site. A G4 region spans residues 148 to 151 (NKMD). A G5 region spans residues 187 to 189 (SGY).

Belongs to the TRAFAC class translation factor GTPase superfamily. Classic translation factor GTPase family. EF-Tu/EF-1A subfamily.

Its subcellular location is the cytoplasm. It carries out the reaction GTP + H2O = GDP + phosphate + H(+). Functionally, GTP hydrolase that promotes the GTP-dependent binding of aminoacyl-tRNA to the A-site of ribosomes during protein biosynthesis. The chain is Elongation factor 1-alpha from Thermoplasma volcanium (strain ATCC 51530 / DSM 4299 / JCM 9571 / NBRC 15438 / GSS1).